The primary structure comprises 128 residues: Glycine cleavage system H protein (128 aa).

The 83-residue stretch at 25-107 (TITVGITHHA…YGAGWFFKLK (83 aa)) folds into the Lipoyl-binding domain. Lys-66 is subject to N6-lipoyllysine.

Belongs to the GcvH family. The glycine cleavage system is composed of four proteins: P, T, L and H. It depends on (R)-lipoate as a cofactor.

In terms of biological role, the glycine cleavage system catalyzes the degradation of glycine. The H protein shuttles the methylamine group of glycine from the P protein to the T protein. The chain is Glycine cleavage system H protein from Neisseria meningitidis serogroup B (strain ATCC BAA-335 / MC58).